We begin with the raw amino-acid sequence, 475 residues long: Glutamate--tRNA ligase (475 aa).

Positions 8 to 18 match the 'HIGH' region motif; that stretch reads PSPTGTLHIGT. Residues 247–251 carry the 'KMSKS' region motif; sequence KLSKR. Lys-250 serves as a coordination point for ATP.

The protein belongs to the class-I aminoacyl-tRNA synthetase family. Glutamate--tRNA ligase type 1 subfamily. As to quaternary structure, monomer.

It is found in the cytoplasm. The enzyme catalyses tRNA(Glu) + L-glutamate + ATP = L-glutamyl-tRNA(Glu) + AMP + diphosphate. In terms of biological role, catalyzes the attachment of glutamate to tRNA(Glu) in a two-step reaction: glutamate is first activated by ATP to form Glu-AMP and then transferred to the acceptor end of tRNA(Glu). In Synechococcus sp. (strain RCC307), this protein is Glutamate--tRNA ligase.